A 267-amino-acid chain; its full sequence is 4-hydroxy-tetrahydrodipicolinate reductase (267 aa).

Residues 9–14 (GASGRM) and aspartate 35 contribute to the NAD(+) site. Residue arginine 36 participates in NADP(+) binding. Residues 98–100 (GTT) and 122–125 (ASNF) each bind NAD(+). The Proton donor/acceptor role is filled by histidine 155. Residue histidine 156 coordinates (S)-2,3,4,5-tetrahydrodipicolinate. Lysine 159 serves as the catalytic Proton donor. Position 165–166 (165–166 (GT)) interacts with (S)-2,3,4,5-tetrahydrodipicolinate.

It belongs to the DapB family.

The protein localises to the cytoplasm. It carries out the reaction (S)-2,3,4,5-tetrahydrodipicolinate + NAD(+) + H2O = (2S,4S)-4-hydroxy-2,3,4,5-tetrahydrodipicolinate + NADH + H(+). The enzyme catalyses (S)-2,3,4,5-tetrahydrodipicolinate + NADP(+) + H2O = (2S,4S)-4-hydroxy-2,3,4,5-tetrahydrodipicolinate + NADPH + H(+). Its pathway is amino-acid biosynthesis; L-lysine biosynthesis via DAP pathway; (S)-tetrahydrodipicolinate from L-aspartate: step 4/4. In terms of biological role, catalyzes the conversion of 4-hydroxy-tetrahydrodipicolinate (HTPA) to tetrahydrodipicolinate. The polypeptide is 4-hydroxy-tetrahydrodipicolinate reductase (Chromobacterium violaceum (strain ATCC 12472 / DSM 30191 / JCM 1249 / CCUG 213 / NBRC 12614 / NCIMB 9131 / NCTC 9757 / MK)).